A 410-amino-acid polypeptide reads, in one-letter code: Killer cell immunoglobulin-like receptor 3DL3 (410 aa).

The first 25 residues, 1 to 25 (MSLMVVSMACVGFFLLEGPWPHVGG), serve as a signal peptide directing secretion. The Extracellular portion of the chain corresponds to 26–322 (QDKPFLSAWP…VSVTGNSRHL (297 aa)). Ig-like C2-type domains lie at 42–97 (GQHV…RCCS), 137–197 (GETV…RCFG), and 237–295 (GENV…RCFG). Intrachain disulfides connect C49–C95 and C144–C195. N179, N239, and N273 each carry an N-linked (GlcNAc...) asparagine glycan. C244 and C293 are oxidised to a cystine. A helical transmembrane segment spans residues 323 to 343 (HVLIGTSVVIIPFAILLFFLL). Topologically, residues 344–410 (HRWCANKKNA…PKTPPTDTSV (67 aa)) are cytoplasmic.

This sequence belongs to the immunoglobulin superfamily.

The protein localises to the cell membrane. Its function is as follows. Receptor on natural killer cells. May inhibit the activity of NK cells thus preventing cell lysis. This chain is Killer cell immunoglobulin-like receptor 3DL3 (KIR3DL3), found in Homo sapiens (Human).